The following is a 241-amino-acid chain: Adenylate kinase 3 (241 aa).

ATP is bound at residue 38 to 43 (GCGKGT). An NMP region spans residues 58 to 87 (ATGDMLRAAVAAKTPLGIKAKEAMDKGELV). AMP is bound by residues T59, R64, 85 to 87 (ELV), 113 to 116 (GFPR), and Q120. Positions 154 to 191 (GRWIHPSSGRSYHTKFAPPKTPGLDDVTGEPLIQRKDD) are LID. R155 contacts ATP. AMP is bound by residues R188 and R199.

It belongs to the adenylate kinase family.

The protein resides in the cytoplasm. It carries out the reaction AMP + ATP = 2 ADP. Catalyzes the reversible transfer of the terminal phosphate group between ATP and AMP. Plays an important role in cellular energy homeostasis and in adenine nucleotide metabolism. This chain is Adenylate kinase 3 (ADK-A), found in Oryza sativa subsp. japonica (Rice).